The chain runs to 308 residues: Ribosomal RNA large subunit methyltransferase F (308 aa).

Belongs to the methyltransferase superfamily. METTL16/RlmF family.

Its subcellular location is the cytoplasm. It catalyses the reaction adenosine(1618) in 23S rRNA + S-adenosyl-L-methionine = N(6)-methyladenosine(1618) in 23S rRNA + S-adenosyl-L-homocysteine + H(+). Specifically methylates the adenine in position 1618 of 23S rRNA. The polypeptide is Ribosomal RNA large subunit methyltransferase F (Escherichia coli O157:H7).